The chain runs to 234 residues: Sugar fermentation stimulation protein A (234 aa).

Positions 201-220 form a DNA-binding region, H-T-H motif; that stretch reads LLSEAQQRGVEILAYKAEIS.

It belongs to the SfsA family.

Binds to DNA non-specifically. Could be a regulatory factor involved in maltose metabolism. This is Sugar fermentation stimulation protein A from Shigella boydii serotype 4 (strain Sb227).